A 179-amino-acid chain; its full sequence is Gamma-crystallin S (179 aa).

Residue Ser2 is modified to N-acetylserine. The N-terminal arm stretch occupies residues 2–5; that stretch reads SKTG. 2 consecutive Beta/gamma crystallin 'Greek key' domains span residues 6–44 and 45–87; these read TKITFYEDKNFQGRRYDCDCDCSDFHTYLSRCNSIRVEG and GTWA…RALH. Residues 88-93 form a connecting peptide region; it reads LSSGGQ. 2 Beta/gamma crystallin 'Greek key' domains span residues 94 to 134 and 135 to 177; these read YKIQ…KVLD and GAWI…RRIV.

The protein belongs to the beta/gamma-crystallin family. As to quaternary structure, monomer.

Functionally, crystallins are the dominant structural components of the vertebrate eye lens. This chain is Gamma-crystallin S (CRYGS), found in Oryctolagus cuniculus (Rabbit).